A 189-amino-acid chain; its full sequence is Protein GrpE (189 aa).

Residues 1 to 38 are compositionally biased toward basic and acidic residues; it reads MTKSNETERMEESEETHSSDIRSASESDHASGSDHTES. The tract at residues 1-54 is disordered; it reads MTKSNETERMEESEETHSSDIRSASESDHASGSDHTESADEIPTADAEQGELEQ.

The protein belongs to the GrpE family. As to quaternary structure, homodimer.

It localises to the cytoplasm. Participates actively in the response to hyperosmotic and heat shock by preventing the aggregation of stress-denatured proteins, in association with DnaK and GrpE. It is the nucleotide exchange factor for DnaK and may function as a thermosensor. Unfolded proteins bind initially to DnaJ; upon interaction with the DnaJ-bound protein, DnaK hydrolyzes its bound ATP, resulting in the formation of a stable complex. GrpE releases ADP from DnaK; ATP binding to DnaK triggers the release of the substrate protein, thus completing the reaction cycle. Several rounds of ATP-dependent interactions between DnaJ, DnaK and GrpE are required for fully efficient folding. The polypeptide is Protein GrpE (Tropheryma whipplei (strain TW08/27) (Whipple's bacillus)).